A 471-amino-acid polypeptide reads, in one-letter code: Secretogranin-3 (471 aa).

An N-terminal signal peptide occupies residues 1-22 (MGFLWTGSWILVLVLNSGPIQA). 3 disordered regions span residues 24-45 (PKPE…ERPL), 89-108 (TVEK…QLNV), and 345-404 (KLEK…TDEA). Positions 28-45 (GSQDKSLHNRELSAERPL) are enriched in basic and acidic residues. Ser40 is modified (phosphoserine). O-linked (Xyl...) (chondroitin sulfate) serine glycosylation occurs at Ser40. Basic and acidic residues-rich tracts occupy residues 345–355 (KLEKNTTDSKS) and 364–404 (KSQE…TDEA). Ser365 carries the phosphoserine modification.

Interacts with CHGA. Interacts with secretogranin II/SCG2. Interacts (via C-terminus) with CPE. In terms of tissue distribution, expressed in various brain areas, with highest levels in the arcuate nucleus and the lateral hypothalamic area, as well as the paraventricular nucleus and the ventromedial hypothalamus (at protein level).

It is found in the cytoplasmic vesicle. The protein localises to the secretory vesicle. The protein resides in the secretory vesicle membrane. It localises to the secreted. In terms of biological role, member of the granin protein family that regulates the biogenesis of secretory granules. Acts as a sorting receptor for intragranular proteins including chromogranin A/CHGA. May also play a role in angiogenesis. Promotes endothelial proliferation, migration and tube formation through MEK/ERK signaling pathway. In Mus musculus (Mouse), this protein is Secretogranin-3 (Scg3).